The primary structure comprises 718 residues: Homeobox-leucine zipper protein HDG9 (718 aa).

Basic and acidic residues predominate over residues methionine 1–glutamate 12. Residues methionine 1–asparagine 35 are disordered. Residues glutamate 26 to asparagine 85 constitute a DNA-binding region (homeobox). Residues arginine 78 to asparagine 152 are a coiled coil. Residues proline 169–glycine 209 form a disordered region. Positions asparagine 176–arginine 194 are enriched in polar residues. In terms of domain architecture, START spans serine 232–phenylalanine 464.

It belongs to the HD-ZIP homeobox family. Class IV subfamily. In terms of tissue distribution, expressed in anthers with highest levels in the tapetum and pollen grains, and chalazal end of the embryo sac.

It localises to the nucleus. Probable transcription factor that binds to the DNA sequence 5'-GCATTAAATGCGCA-3'. The sequence is that of Homeobox-leucine zipper protein HDG9 (HDG9) from Arabidopsis thaliana (Mouse-ear cress).